Here is a 66-residue protein sequence, read N- to C-terminus: Large ribosomal subunit protein bL33c (66 aa).

It belongs to the bacterial ribosomal protein bL33 family.

It localises to the plastid. It is found in the chloroplast. The polypeptide is Large ribosomal subunit protein bL33c (Daucus carota (Wild carrot)).